Consider the following 469-residue polypeptide: Endoplasmic reticulum oxidoreductin-1 (469 aa).

Positions 1 to 36 are cleaved as a signal peptide; it reads MGKGAIKEEESEKKRKTWRWPLATLVVVFLAVAVSS. 6 disulfide bridges follow: Cys52–Cys71, Cys54–Cys69, Cys108–Cys372, Cys117–Cys122, Cys222–Cys231, and Cys375–Cys378. 3 residues coordinate FAD: Arg201, Thr203, and Trp214. Ser242, His245, Arg275, and Arg282 together coordinate FAD. The N-linked (GlcNAc...) asparagine glycan is linked to Asn365.

Belongs to the EROs family. As to quaternary structure, may function both as a monomer and a homodimer. It depends on FAD as a cofactor. Post-translationally, N-glycosylated.

It localises to the endoplasmic reticulum membrane. Functionally, essential oxidoreductase that oxidizes proteins in the endoplasmic reticulum to produce disulfide bonds. Acts by oxidizing directly PDI isomerase through a direct disulfide exchange. Does not act as a direct oxidant of folding substrate, but relies on PDI to transfer oxidizing equivalent. Does not oxidize all PDI related proteins, suggesting that it can discriminate between PDI and related proteins. Its reoxidation probably involves electron transfer to molecular oxygen via FAD. Acts independently of glutathione. May be responsible for a significant proportion of reactive oxygen species (ROS) in the cell, thereby being a source of oxidative stress. The chain is Endoplasmic reticulum oxidoreductin-1 (AERO1) from Arabidopsis thaliana (Mouse-ear cress).